Consider the following 196-residue polypeptide: Large ribosomal subunit protein uL14my (196 aa).

The transit peptide at 1–62 directs the protein to the mitochondrion; sequence MATALASKLS…TILKCVDNSC (62 aa). The tract at residues 148 to 175 is disordered; the sequence is EKKGQNNSHGSKRKMEYNQPTGTRVFGP.

Belongs to the universal ribosomal protein uL14 family. As to quaternary structure, part of the mitochondrial 50S ribosomal subunit. Mostly expressed in pistils and inflorescences, including floral organs and meristems, and, to a lower extent, in leaves.

The protein localises to the mitochondrion. In terms of biological role, binds to 23S rRNA in mitochondrion. Required for the formation of the proximal region of the ovule primordium during floral organogenesis, thus participating in patterning and growth of ovule. Also regulates the initiation and/or maintenance of integument and embryo sac ontogenesis. Prevents inappropriate cell death in the young ovule. The chain is Large ribosomal subunit protein uL14my (HLL) from Arabidopsis thaliana (Mouse-ear cress).